The primary structure comprises 311 residues: Aspartate carbamoyltransferase catalytic subunit (311 aa).

Arg-57 and Thr-58 together coordinate carbamoyl phosphate. Lys-86 provides a ligand contact to L-aspartate. 3 residues coordinate carbamoyl phosphate: Arg-107, His-135, and Gln-138. L-aspartate contacts are provided by Arg-168 and Arg-230. Residues Leu-269 and Pro-270 each coordinate carbamoyl phosphate.

Belongs to the aspartate/ornithine carbamoyltransferase superfamily. ATCase family. As to quaternary structure, heterooligomer of catalytic and regulatory chains.

The enzyme catalyses carbamoyl phosphate + L-aspartate = N-carbamoyl-L-aspartate + phosphate + H(+). The protein operates within pyrimidine metabolism; UMP biosynthesis via de novo pathway; (S)-dihydroorotate from bicarbonate: step 2/3. In terms of biological role, catalyzes the condensation of carbamoyl phosphate and aspartate to form carbamoyl aspartate and inorganic phosphate, the committed step in the de novo pyrimidine nucleotide biosynthesis pathway. This chain is Aspartate carbamoyltransferase catalytic subunit, found in Staphylothermus marinus (strain ATCC 43588 / DSM 3639 / JCM 9404 / F1).